The following is a 524-amino-acid chain: MFHCIPLWRCNRHVESIDKRHCSLVYVPEEIYRYARSLEELLLDANQLRELPEQFFQLVKLRKLGLSDNEIQRLPPEIANFMQLVELDVSRNEIPEIPESISFCKALQVADFSGNPLTRLPESFPELQNLTCLSVNDISLQSLPENIGNLYNLASLELRENLLTYLPDSLTQLRRLEELDLGNNEIYNLPESIGALLHLKDLWLDGNQLSELPQEIGNLKNLLCLDVSENRLERLPEEISGLTSLTDLVISQNLLETIPDGIGKLKKLSILKVDQNRLTQLPEAVGECESLTELVLTENQLLTLPKSIGKLKKLSNLNADRNKLVSLPKEIGGCCSLTVFCVRDNRLTRIPAEVSQATELHVLDVAGNRLLHLPLSLTALKLKALWLSDNQSQPLLTFQTDTDYTTGEKILTCVLLPQLPSEPTCQENLPRCGALENLVNDVSDEAWNERAVNRVSAIRFVEDEKDEEDNETRTLLRRATPHPGELKHMKKTVENLRNDMNAAKGLDSNKNEVNHAIDRVTTSV.

LRR repeat units follow at residues 11-34 (NRHVESIDKRHCSLVYVPEEIYRY), 35-58 (ARSLEELLLDANQLRELPEQFFQL), 60-81 (KLRKLGLSDNEIQRLPPEIANF), 83-105 (QLVELDVSRNEIPEIPESISFCK), 107-126 (LQVADFSGNPLTRLPESFPE), 127-149 (LQNLTCLSVNDISLQSLPENIGN), 150-172 (LYNLASLELRENLLTYLPDSLTQ), 173-196 (LRRLEELDLGNNEIYNLPESIGAL), 198-218 (HLKDLWLDGNQLSELPQEIGN), 219-242 (LKNLLCLDVSENRLERLPEEISGL), 244-264 (SLTDLVISQNLLETIPDGIGK), 265-288 (LKKLSILKVDQNRLTQLPEAVGEC), 290-310 (SLTELVLTENQLLTLPKSIGK), 311-334 (LKKLSNLNADRNKLVSLPKEIGGC), 336-356 (SLTVFCVRDNRLTRIPAEVSQ), 357-380 (ATELHVLDVAGNRLLHLPLSLTAL), and 382-405 (LKALWLSDNQSQPLLTFQTDTDYT). A Phosphothreonine modification is found at threonine 480. Positions 484 to 512 (GELKHMKKTVENLRNDMNAAKGLDSNKNE) form a coiled coil.

Interacts with DLG1 and DLG4. May form a complex with DLG1 and ERBIN, where interaction between LRRC1 and ERBIN is indirect. In terms of tissue distribution, expressed strongly in testis and placenta, followed by heart, lung, kidney, thyroid, trachea, colon, prostate and pancreas.

The protein localises to the cytoplasm. It localises to the membrane. In Homo sapiens (Human), this protein is Leucine-rich repeat-containing protein 1 (LRRC1).